A 427-amino-acid chain; its full sequence is 3-phosphoshikimate 1-carboxyvinyltransferase (427 aa).

3-phosphoshikimate-binding residues include K22, S23, and R27. K22 contributes to the phosphoenolpyruvate binding site. Phosphoenolpyruvate is bound by residues G96 and R124. 3-phosphoshikimate contacts are provided by S169, S170, Q171, S197, D313, N336, and K340. Q171 is a phosphoenolpyruvate binding site. D313 acts as the Proton acceptor in catalysis. Phosphoenolpyruvate is bound by residues R344, R386, and K411.

The protein belongs to the EPSP synthase family. In terms of assembly, monomer.

It is found in the cytoplasm. The catalysed reaction is 3-phosphoshikimate + phosphoenolpyruvate = 5-O-(1-carboxyvinyl)-3-phosphoshikimate + phosphate. The protein operates within metabolic intermediate biosynthesis; chorismate biosynthesis; chorismate from D-erythrose 4-phosphate and phosphoenolpyruvate: step 6/7. In terms of biological role, catalyzes the transfer of the enolpyruvyl moiety of phosphoenolpyruvate (PEP) to the 5-hydroxyl of shikimate-3-phosphate (S3P) to produce enolpyruvyl shikimate-3-phosphate and inorganic phosphate. The protein is 3-phosphoshikimate 1-carboxyvinyltransferase of Salmonella newport (strain SL254).